The chain runs to 2667 residues: eIF-2-alpha kinase activator GCN1 (2667 aa).

HEAT repeat units follow at residues 19-56, 95-132, 159-198, 293-330, 336-375, 398-439, 466-503, and 794-832; these read DSFY…HELS, QWIF…VKFT, SFSL…LQHM, DLQS…DFNV, LLKS…RSKD, SQKL…SISI, ELPE…PEAN, and LLNE…ELFV. Positions 842–879 are disordered; the sequence is RNDRKVKPKTAEEQRDEESRKRIEEKKKIQSGELEKQE. HEAT repeat units lie at residues 929–967, 985–1024, 1085–1122, 1199–1237, 1290–1330, 1333–1370, 1371–1407, 1412–1450, 1454–1491, 1492–1529, 1533–1570, 1572–1608, 1610–1647, 1652–1689, 1691–1728, 1729–1766, 1770–1807, and 1809–1845; these read PIIV…LDRS, LSEI…IIKN, GVET…IYSP, HMIP…ATAL, GELL…HMDA, PKVS…SFKK, QGDR…VKGL, LKNY…TIGR, PYII…QLSG, HGVK…CAPK, SCLP…VIRN, EIQI…HTID, ASLS…LTEP, PYLN…GMGE, NFST…SLDI, SRFN…SLGD, PYLP…QFAV, and GIEV…KLAG. Positions 1853 to 1875 are disordered; sequence SNNSSYNAKDDDDDEPGSSGNDI. 10 HEAT repeats span residues 1882–1919, 1923–1960, 1962–1998, 2002–2039, 2040–2078, 2080–2110, 2114–2152, 2154–2190, 2193–2230, and 2264–2301; these read ERLG…NTPK, EILP…KLSD, ILPE…SAKT, PYLS…TFGS, KASN…VRSS, VLPV…DAGE, VHLS…SIDE, GWDT…GNTM, EYPE…SLKK, and KGLA…HTSA. Positions 2265–2412 are RWDBD region; the sequence is GLASVLPVLI…ISQESKLRAL (148 aa). An HEAT 37; degenerate repeat occupies 2326–2348; the sequence is QVKSAILQTLSLLISKSPASMKI. Residues 2349–2385 form an HEAT 38; degenerate repeat; sequence FLHQLQPTFIKCLSDSHKNVRTNAASALGLLMTLSSS. HEAT repeat units lie at residues 2387–2421, 2425–2462, 2508–2545, and 2546–2583; these read DQLV…KKPK, ATLD…CFTS, PNMP…ASPL, and TYAK…SNQQ.

Belongs to the GCN1 family. In terms of assembly, interacts with eif2ak4/gcn2; this interaction stimulates the eif2ak4/gcn2 kinase activity and is impaired by impact upon a variety of stress conditions, such as amino acid depletion, UV-C irradiation, proteasome inhibitor treatment and glucose deprivation. Interacts with impact; this prevents the interaction of gcn1 with eif2ak4/gcn2 and inhibits eif2ak4/gcn2 kinase activity.

Its subcellular location is the cytoplasm. Ribosome collision sensor that activates a translation quality control pathway when a ribosome has stalled during translation. Directly binds to the ribosome and acts as a sentinel for colliding ribosomes. Gcn1 also acts as a positive activator of the integrated stress response (ISR) by mediating activation of eif2ak4/gcn2 in response to amino acid starvation. Interaction with eif2ak4/gcn2 on translating ribosomes stimulates eif2ak4/gcn2 kinase activity, leading to phosphorylation of eukaryotic translation initiation factor 2 (eIF-2-alpha/eif2s1). EIF2S1/eIF-2-alpha phosphorylation converts EIF2S1/eIF-2-alpha into a global protein synthesis inhibitor, leading to a global attenuation of cap-dependent translation, and thus to a reduced overall utilization of amino acids, while concomitantly initiating the preferential translation of ISR-specific mRNAs, such as the transcriptional activator atf4, and hence allowing atf4-mediated reprogramming of amino acid biosynthetic gene expression to alleviate nutrient depletion. This is eIF-2-alpha kinase activator GCN1 from Dictyostelium discoideum (Social amoeba).